Consider the following 226-residue polypeptide: MMTNLFSVFDPSTTIFNMSLNWFSTFIGLLIIPSTFWLMPNRFQIIWNNILLTLHKEFKTLLGPNGHNGSTLMFVSLFSLIMFNNFLGLFPYIFTSTSHLTLTLTLAFPLWLSFMLYGWICHTQHMFAHLVPQGTPPMLMPFMVCIKTISNVIRPGTLAVRLTANMIAGHLLMTLLGNTGPMSTSYIILSMILITQIALLVLESAVAIIQSYVFAVLSTLYSSEVN.

A run of 5 helical transmembrane segments spans residues 20–40, 74–94, 100–120, 162–182, and 187–207; these read LNWFSTFIGLLIIPSTFWLMP, FVSLFSLIMFNNFLGLFPYIF, LTLTLTLAFPLWLSFMLYGWI, LTANMIAGHLLMTLLGNTGPM, and IILSMILITQIALLVLESAVA.

This sequence belongs to the ATPase A chain family. In terms of assembly, F-type ATPases have 2 components, CF(1) - the catalytic core - and CF(0) - the membrane proton channel. CF(1) has five subunits: alpha(3), beta(3), gamma(1), delta(1), epsilon(1). CF(0) has three main subunits: a, b and c.

It localises to the mitochondrion inner membrane. Mitochondrial membrane ATP synthase (F(1)F(0) ATP synthase or Complex V) produces ATP from ADP in the presence of a proton gradient across the membrane which is generated by electron transport complexes of the respiratory chain. F-type ATPases consist of two structural domains, F(1) - containing the extramembraneous catalytic core and F(0) - containing the membrane proton channel, linked together by a central stalk and a peripheral stalk. During catalysis, ATP synthesis in the catalytic domain of F(1) is coupled via a rotary mechanism of the central stalk subunits to proton translocation. Key component of the proton channel; it may play a direct role in the translocation of protons across the membrane. The protein is ATP synthase subunit a (mt:ATPase6) of Aedes albopictus (Asian tiger mosquito).